Here is a 159-residue protein sequence, read N- to C-terminus: Transcriptional repressor NrdR (159 aa).

Residues 1–21 are disordered; the sequence is MRCPKCQHNKSNVIDSRQAED. The segment at 3–34 is a zinc-finger region; the sequence is CPKCQHNKSNVIDSRQAEDGNTIRRRRECDAC. The ATP-cone domain maps to 49–139; sequence LLVVKKDGTR…VYRSFKDVDE (91 aa).

The protein belongs to the NrdR family. The cofactor is Zn(2+).

Its function is as follows. Negatively regulates transcription of bacterial ribonucleotide reductase nrd genes and operons by binding to NrdR-boxes. The chain is Transcriptional repressor NrdR from Streptococcus thermophilus (strain CNRZ 1066).